We begin with the raw amino-acid sequence, 818 residues long: H(+)/Cl(-) exchange transporter 3 (818 aa).

Residues 1–125 (MESEQLFHRG…WEMTKSLYDA (125 aa)) are Cytoplasmic-facing. Positions 13-17 (RNSYN) match the Di-leucine internalization motif; mediates targeting to late endosome and lysosome membranes motif. The IP motif; mediates targeting to recycling endosomes motif lies at 18–19 (SI). Short sequence motifs (di-leucine internalization motif; mediates targeting to late endosome and lysosome membranes) lie at residues 28–29 (LL), 46–47 (LL), and 71–75 (LLDLL). A helical membrane pass occupies residues 126-163 (WSGWLVVTLTGLASGALAGLIDIAADWMTDLKEGICLS). N-linked (GlcNAc...) asparagine glycosylation is present at Asn-177. Residues 209–232 (MNYIMYIFWALSFAFLAVSLVKVF) traverse the membrane as a helical segment. A Selectivity filter part_1 motif is present at residues 238-242 (GSGIP). Ser-239 provides a ligand contact to chloride. Positions 241–248 (IPEIKTIL) form an intramembrane region, helical. A run of 2 helical transmembrane segments spans residues 258 to 276 (GKWT…VASG) and 282 to 301 (EGPL…YLFP). Residues 280 to 284 (GKEGP) carry the Selectivity filter part_2 motif. 2 intramembrane regions (helical) span residues 313–325 (VLSA…VSVA) and 329–337 (PIGGVLFSL). The next 3 helical transmembrane spans lie at 349-367 (LWRS…RSIN), 391-416 (FPFI…AWCR), and 423-443 (FGKY…VIAF). 2 N-linked (GlcNAc...) asparagine glycosylation sites follow: Asn-451 and Asn-479. The next 2 membrane-spanning stretches (helical) occupy residues 500 to 520 (IWQL…TFGI) and 525 to 544 (GLFI…VGIA). A Selectivity filter part_3 motif is present at residues 525–529 (GLFIP). Chloride is bound at residue Phe-527. 2 intramembrane regions (helical) span residues 572–586 (GLYA…LGGV) and 590–601 (TVSLVVIVFELT). The note=Loop between two helices intramembrane region spans 602–605 (GGLE). A helical transmembrane segment spans residues 606 to 624 (YIVPLMAAVMTSKWVGDAF). At 625 to 818 (GREGIYEAHI…NQDPASIMFN (194 aa)) the chain is on the cytoplasmic side. Tyr-630 provides a ligand contact to chloride. CBS domains lie at 658-722 (MRPR…ARKK) and 755-812 (LDMS…NQDP). ATP-binding positions include 689–691 (YNG) and 796–799 (TKKD).

Belongs to the chloride channel (TC 2.A.49) family. ClC-3/CLCN3 subfamily. In terms of assembly, monomer and homodimer. Forms heterodimers with CLCN4. Post-translationally, N-glycosylated. In terms of tissue distribution, detected in kidney, in the apical part of proximal tubule cells (at protein level). Expressed at high levels in the kidney while a low level expression is seen in the brain. Within the brain, it is prominent in the hippocampus, cerebral cortex and olfactory bulb. As to expression, brain, pancreas, kidney, liver, lung, retina, olfactory bulb, and spinal cord. Pancreas, kidney, liver, lung and retina. In terms of tissue distribution, brain, heart, pancreas, kidney, liver, lung, retina, olfactory bulb, and spinal cord. As to expression, expressed at high levels in the liver and at low levels in the brain.

The protein resides in the cytoplasmic vesicle. Its subcellular location is the secretory vesicle membrane. It is found in the lysosome membrane. The protein localises to the late endosome membrane. It localises to the cell membrane. The protein resides in the early endosome membrane. Its subcellular location is the recycling endosome membrane. Its activity is regulated as follows. Inhibited by Cd(2+). In terms of biological role, may influence large dense-core vesicle exocytosis in adrenal chromaffin cells. Strongly outwardly rectifying, electrogenic H(+)/Cl(-)exchanger which mediates the exchange of chloride ions against protons. The CLC channel family contains both chloride channels and proton-coupled anion transporters that exchange chloride or another anion for protons. The presence of conserved gating glutamate residues is typical for family members that function as antiporters. Functionally, strongly outwardly rectifying, electrogenic H(+)/Cl(-)exchanger which mediates the exchange of chloride ions against protons. Facilitates endosomal acidification and chloride accumulation in hepatocytes. Its function is as follows. Strongly outwardly rectifying, electrogenic H(+)/Cl(-)exchanger which mediates the exchange of chloride ions against protons. This is H(+)/Cl(-) exchange transporter 3 (Clcn3) from Mus musculus (Mouse).